The sequence spans 251 residues: 3-deoxy-manno-octulosonate cytidylyltransferase (251 aa).

The protein belongs to the KdsB family.

It localises to the cytoplasm. It carries out the reaction 3-deoxy-alpha-D-manno-oct-2-ulosonate + CTP = CMP-3-deoxy-beta-D-manno-octulosonate + diphosphate. Its pathway is nucleotide-sugar biosynthesis; CMP-3-deoxy-D-manno-octulosonate biosynthesis; CMP-3-deoxy-D-manno-octulosonate from 3-deoxy-D-manno-octulosonate and CTP: step 1/1. It participates in bacterial outer membrane biogenesis; lipopolysaccharide biosynthesis. Its function is as follows. Activates KDO (a required 8-carbon sugar) for incorporation into bacterial lipopolysaccharide in Gram-negative bacteria. This chain is 3-deoxy-manno-octulosonate cytidylyltransferase, found in Brucella abortus (strain 2308).